The primary structure comprises 826 residues: Leucine--tRNA ligase (826 aa).

The 'HIGH' region signature appears at 41-51 (PYPSGKLHMGH). Positions 586-590 (KMSKS) match the 'KMSKS' region motif. Residue Lys-589 coordinates ATP.

It belongs to the class-I aminoacyl-tRNA synthetase family.

It localises to the cytoplasm. It catalyses the reaction tRNA(Leu) + L-leucine + ATP = L-leucyl-tRNA(Leu) + AMP + diphosphate. The protein is Leucine--tRNA ligase of Natranaerobius thermophilus (strain ATCC BAA-1301 / DSM 18059 / JW/NM-WN-LF).